A 315-amino-acid chain; its full sequence is Initiation factor TFIIB homolog (315 aa).

The protein belongs to the asfivirus C315R family.

Its function is as follows. Putative initation factor. This Ornithodoros (relapsing fever ticks) protein is Initiation factor TFIIB homolog.